We begin with the raw amino-acid sequence, 319 residues long: Coproporphyrin III ferrochelatase 2 (319 aa).

Fe-coproporphyrin III contacts are provided by residues Tyr13, Arg30, 46–47 (RY), Ser54, and Tyr125. 2 residues coordinate Fe(2+): His181 and Glu262.

The protein belongs to the ferrochelatase family.

Its subcellular location is the cytoplasm. The catalysed reaction is Fe-coproporphyrin III + 2 H(+) = coproporphyrin III + Fe(2+). The protein operates within porphyrin-containing compound metabolism; protoheme biosynthesis. Functionally, involved in coproporphyrin-dependent heme b biosynthesis. Catalyzes the insertion of ferrous iron into coproporphyrin III to form Fe-coproporphyrin III. This is Coproporphyrin III ferrochelatase 2 from Bacillus anthracis.